The chain runs to 328 residues: Arylacetonitrilase (328 aa).

Residues 5-278 (VRVAVTQAEP…EGIIYADLDF (274 aa)) enclose the CN hydrolase domain. Glu-45 (proton acceptor) is an active-site residue. The active site involves Lys-125. Residue Cys-160 is the Nucleophile of the active site.

Belongs to the carbon-nitrogen hydrolase superfamily. Nitrilase family.

It carries out the reaction a nitrile + 2 H2O = a carboxylate + NH4(+). It catalyses the reaction 4-chlorophenylacetonitrile + 2 H2O = 4-chlorophenylacetate + NH4(+). Its function is as follows. Nitrilase that hydrolyzes preferentially phenylacetonitrile, (R,S)-mandelonitrile, and 3-indolylacetonitrile. The protein is Arylacetonitrilase of Aspergillus niger (strain ATCC MYA-4892 / CBS 513.88 / FGSC A1513).